We begin with the raw amino-acid sequence, 242 residues long: Probable transcriptional regulatory protein BamMC406_2210 (242 aa).

Belongs to the TACO1 family.

It is found in the cytoplasm. This is Probable transcriptional regulatory protein BamMC406_2210 from Burkholderia ambifaria (strain MC40-6).